A 339-amino-acid polypeptide reads, in one-letter code: Transmembrane protein 120B (339 aa).

Residues 1 to 67 (MSGQLERCER…KHTLQRYKRH (67 aa)) are a coiled coil. A run of 6 helical transmembrane segments spans residues 102-124 (GLYLNLVLGNVSVTLLSNQAKFA), 132-152 (FKLYLTIILLLGAVACRFVLH), 159-179 (VFNFLLVWYYCTLTIRESILI), 187-207 (GWWVSHHYVSTFLSGVMLTWP), 270-290 (FLLPFLFCGHFWQLYNAVTLF), and 302-322 (QVFVLALTFLILFLGNFLTTL).

This sequence belongs to the TMEM120 family. Heterooligomer with TMEM120A. As to expression, expressed in inguinal and subcutaneous white adipose tissue and in brown adipose tissue.

Its subcellular location is the nucleus inner membrane. In terms of biological role, necessary for efficient adipogenesis. Does not show ion channel activity. The protein is Transmembrane protein 120B of Mus musculus (Mouse).